A 514-amino-acid polypeptide reads, in one-letter code: ATP synthase subunit alpha (514 aa).

169 to 176 (GDRQTGKT) is an ATP binding site.

It belongs to the ATPase alpha/beta chains family. As to quaternary structure, F-type ATPases have 2 components, CF(1) - the catalytic core - and CF(0) - the membrane proton channel. CF(1) has five subunits: alpha(3), beta(3), gamma(1), delta(1), epsilon(1). CF(0) has three main subunits: a(1), b(2) and c(9-12). The alpha and beta chains form an alternating ring which encloses part of the gamma chain. CF(1) is attached to CF(0) by a central stalk formed by the gamma and epsilon chains, while a peripheral stalk is formed by the delta and b chains.

It localises to the cell membrane. The enzyme catalyses ATP + H2O + 4 H(+)(in) = ADP + phosphate + 5 H(+)(out). Its function is as follows. Produces ATP from ADP in the presence of a proton gradient across the membrane. The alpha chain is a regulatory subunit. The polypeptide is ATP synthase subunit alpha (Buchnera aphidicola subsp. Baizongia pistaciae (strain Bp)).